An 838-amino-acid chain; its full sequence is Axin-2 (838 aa).

A disordered region spans residues 1-75; the sequence is MSSAVLVTLL…EGRASPDSPL (75 aa). The Tankyrase-binding motif signature appears at 21–30; the sequence is APRPPVPGEE. A compositionally biased stretch (polar residues) spans 42 to 55; that stretch reads KVQSTKPMPVSSNA. Positions 56–69 are enriched in basic and acidic residues; sequence RRNEDGLGEPEGRA. An RGS domain is found at 81–200; the sequence is SLHSLLGDQD…LTSDIYLEYV (120 aa). Disordered regions lie at residues 300–333, 398–435, 450–483, 568–682, and 712–744; these read SELS…KKQL, IRED…EEDP, PGCQ…LLPT, GSRG…AMPP, and VASQ…DHKE. Low complexity predominate over residues 303-318; sequence SSDALTDDSMSMTDSS. The tract at residues 327–413 is interaction with GSK3B; sequence MGSKKQLQRE…KEGSEQALSS (87 aa). The segment at 413-476 is interaction with beta-catenin; that stretch reads SRDGAPVQHP…PDHHHHHHQQ (64 aa). Residues 727–737 show a composition bias toward polar residues; sequence AGPTSFSNPSL. Residues 756-838 enclose the DIX domain; the sequence is ASELIVTYFF…RILGKVERID (83 aa).

Interacts with SMAD7 and RNF111. Interacts with ANKRD6. Interacts with glycogen synthase kinase-3 beta (GSK3B) and beta-catenin. The interaction between axin and beta-catenin occurs via the armadillo repeats contained in beta-catenin. Interacts with SIAH1. Interacts with SIAH2. ADP-ribosylated by tankyrase TNKS and TNKS2. Poly-ADP-ribosylated protein is recognized by RNF146, followed by ubiquitination and subsequent activation of the Wnt signaling pathway. In terms of processing, ubiquitinated by RNF146 when poly-ADP-ribosylated, leading to its degradation and subsequent activation of the Wnt signaling pathway. Deubiquitinated by USP34, deubiquitinated downstream of beta-catenin stabilization step: deubiquitination is important Wnt signaling to positively regulate beta-catenin (CTNBB1)-mediated transcription. Post-translationally, probably phosphorylated by GSK3B and dephosphorylated by PP2A. As to expression, expressed in lung and thymus.

It is found in the cytoplasm. Inhibitor of the Wnt signaling pathway. Down-regulates beta-catenin. Probably facilitate the phosphorylation of beta-catenin and APC by GSK3B. The chain is Axin-2 (Axin2) from Rattus norvegicus (Rat).